A 273-amino-acid chain; its full sequence is Phosphatidylglycerol--prolipoprotein diacylglyceryl transferase (273 aa).

The next 3 helical transmembrane spans lie at 20-40 (LAVRWYALAYMVSFIIALPIA), 59-79 (FLFYAILGVLLGGRLGYVLFY), and 97-117 (GGMSFHGGALGVILALAYFSW). R142 contributes to the a 1,2-diacyl-sn-glycero-3-phospho-(1'-sn-glycerol) binding site. The next 2 helical transmembrane spans lie at 206 to 226 (FGFLSGLFLFGYACARSFCEF) and 243 to 263 (MGQLLCIPMALAGMGLMVYAM).

It belongs to the Lgt family.

Its subcellular location is the cell inner membrane. It catalyses the reaction L-cysteinyl-[prolipoprotein] + a 1,2-diacyl-sn-glycero-3-phospho-(1'-sn-glycerol) = an S-1,2-diacyl-sn-glyceryl-L-cysteinyl-[prolipoprotein] + sn-glycerol 1-phosphate + H(+). It functions in the pathway protein modification; lipoprotein biosynthesis (diacylglyceryl transfer). In terms of biological role, catalyzes the transfer of the diacylglyceryl group from phosphatidylglycerol to the sulfhydryl group of the N-terminal cysteine of a prolipoprotein, the first step in the formation of mature lipoproteins. The sequence is that of Phosphatidylglycerol--prolipoprotein diacylglyceryl transferase from Gluconobacter oxydans (strain 621H) (Gluconobacter suboxydans).